A 611-amino-acid polypeptide reads, in one-letter code: Probable methyltransferase PMT19 (611 aa).

The Cytoplasmic portion of the chain corresponds to 1 to 15 (MNPSQQHLPKLCPKR). Residues 16–36 (LFLFFTPFLLFSLYYILTTIK) traverse the membrane as a helical; Signal-anchor for type II membrane protein segment. Residues 37–611 (TITISSQDRH…TILIVDNSIK (575 aa)) are Lumenal-facing. Residues Asn-68, Asn-97, Asn-289, Asn-408, Asn-411, and Asn-587 are each glycosylated (N-linked (GlcNAc...) asparagine).

It belongs to the methyltransferase superfamily.

The protein localises to the endoplasmic reticulum membrane. The polypeptide is Probable methyltransferase PMT19 (Arabidopsis thaliana (Mouse-ear cress)).